A 1201-amino-acid polypeptide reads, in one-letter code: Period circadian protein homolog 3 (1201 aa).

Residues 1–50 (MPRGEAPGPGRRGAKDEALGEESGERWSPEFHLQRKLADSSHSEQQDRNR) are disordered. Residues 13–50 (GAKDEALGEESGERWSPEFHLQRKLADSSHSEQQDRNR) show a composition bias toward basic and acidic residues. The short motif at 55-64 (LIMVVQEMKK) is the Nuclear export signal 1 element. 2 consecutive PAS domains span residues 121–188 (IASE…RAQL) and 262–328 (YEAP…KVLK). The PAC domain maps to 337–380 (HSPIRFCTQNGDYIILDSSWSSFVNPWSRKISFIIGRHKVRTSP). The short motif at 403-412 (LQEQIYKLLL) is the Nuclear export signal 3 element. Residues 555–760 (LKRKCISCTN…SSSNTGSGPR (206 aa)) are CSNK1E binding domain. Disordered regions lie at residues 717 to 788 (YSYF…FPPA) and 881 to 923 (PSMS…RSSS). The span at 721 to 731 (QGDSTSKQTRS) shows a compositional bias: polar residues. The short motif at 729–745 (TRSAGCRKGKHKRKKLP) is the Nuclear localization signal element. Positions 733–743 (GCRKGKHKRKK) are enriched in basic residues. Composition is skewed to low complexity over residues 767–783 (AQPC…TSSP) and 881–890 (PSMSSAMSPT). The segment covering 900-911 (QRREEEKWEAQS) has biased composition (basic and acidic residues). At Ser919 the chain carries Phosphoserine. The short motif at 925–932 (LQLNLLQE) is the Nuclear export signal 2 element. Positions 952–1067 (TEYCVTGNNG…GSAASGSSDS (116 aa)) are disordered. Polar residues-rich tracts occupy residues 957–976 (TGNN…STGS), 983–994 (SHPTASALSTGS), 1001–1012 (SHPTASALSTGS), and 1035–1050 (TPSH…GSPP). 5 repeat units span residues 965 to 982 (SPAT…RENP), 983 to 1000 (SHPT…MKNP), 1001 to 1018 (SHPT…MKNP), 1019 to 1036 (SHPT…SRTP), and 1037 to 1054 (SHPT…SESP). Positions 965-1054 (SPATTGALST…STGSPPSESP (90 aa)) are 5 X 18 AA tandem repeats of S-[HP]-[AP]-T-[AT]-[GST]-[ATV]-L-S-[MT]-G-[LS]-P-P-[MRS]-[EKR]-[NST]-P. Ser994 is modified (phosphoserine). Ser1053 carries the phosphoserine modification. Low complexity predominate over residues 1053–1067 (SPSRTGSAASGSSDS). The segment at 1123 to 1201 (ERVKEVVLKE…CGQVLVEDSC (79 aa)) is CRY binding domain.

In terms of assembly, homodimer. Component of the circadian core oscillator, which includes the CRY proteins, CLOCK or NPAS2, BMAL1 or BMAL2, CSNK1D and/or CSNK1E, TIMELESS and the PER proteins. Interacts directly with PER1, PER2, CRY1, CRY2, and TIMELESS; interaction with CRY1 and CRY2 is weak and not rhythmic. Interacts with FBXW11 and BTRC. In terms of processing, phosphorylation by CSNK1E is weak and appears to require association with PER1 and translocation to the nucleus. Post-translationally, ubiquitinated.

It localises to the cytoplasm. It is found in the nucleus. In terms of biological role, originally described as a core component of the circadian clock. The circadian clock, an internal time-keeping system, regulates various physiological processes through the generation of approximately 24 hour circadian rhythms in gene expression, which are translated into rhythms in metabolism and behavior. It is derived from the Latin roots 'circa' (about) and 'diem' (day) and acts as an important regulator of a wide array of physiological functions including metabolism, sleep, body temperature, blood pressure, endocrine, immune, cardiovascular, and renal function. Consists of two major components: the central clock, residing in the suprachiasmatic nucleus (SCN) of the brain, and the peripheral clocks that are present in nearly every tissue and organ system. Both the central and peripheral clocks can be reset by environmental cues, also known as Zeitgebers (German for 'timegivers'). The predominant Zeitgeber for the central clock is light, which is sensed by retina and signals directly to the SCN. The central clock entrains the peripheral clocks through neuronal and hormonal signals, body temperature and feeding-related cues, aligning all clocks with the external light/dark cycle. Circadian rhythms allow an organism to achieve temporal homeostasis with its environment at the molecular level by regulating gene expression to create a peak of protein expression once every 24 hours to control when a particular physiological process is most active with respect to the solar day. Transcription and translation of core clock components (CLOCK, NPAS2, BMAL1, BMAL2, PER1, PER2, PER3, CRY1 and CRY2) plays a critical role in rhythm generation, whereas delays imposed by post-translational modifications (PTMs) are important for determining the period (tau) of the rhythms (tau refers to the period of a rhythm and is the length, in time, of one complete cycle). A diurnal rhythm is synchronized with the day/night cycle, while the ultradian and infradian rhythms have a period shorter and longer than 24 hours, respectively. Disruptions in the circadian rhythms contribute to the pathology of cardiovascular diseases, cancer, metabolic syndromes and aging. A transcription/translation feedback loop (TTFL) forms the core of the molecular circadian clock mechanism. Transcription factors, CLOCK or NPAS2 and BMAL1 or BMAL2, form the positive limb of the feedback loop, act in the form of a heterodimer and activate the transcription of core clock genes and clock-controlled genes (involved in key metabolic processes), harboring E-box elements (5'-CACGTG-3') within their promoters. The core clock genes: PER1/2/3 and CRY1/2 which are transcriptional repressors form the negative limb of the feedback loop and interact with the CLOCK|NPAS2-BMAL1|BMAL2 heterodimer inhibiting its activity and thereby negatively regulating their own expression. This heterodimer also activates nuclear receptors NR1D1, NR1D2, RORA, RORB and RORG, which form a second feedback loop and which activate and repress BMAL1 transcription, respectively. Has a redundant role with the other PER proteins PER1 and PER2 and is not essential for the circadian rhythms maintenance. In contrast, plays an important role in sleep-wake timing and sleep homeostasis probably through the transcriptional regulation of sleep homeostasis-related genes, without influencing circadian parameters. Can bind heme. The sequence is that of Period circadian protein homolog 3 (PER3) from Homo sapiens (Human).